Consider the following 269-residue polypeptide: Mitochondrial distribution and morphology protein 12 (269 aa).

Positions 1 to 269 constitute an SMP-LTD domain; the sequence is MSLEVNWEQI…WPNWIEFQGV (269 aa). The disordered stretch occupies residues 72-119; sequence ERAGTGEGDEDDGRVAPTSTPMKHQTSGSSDQTDASNPISPSTSHDHE. Polar residues predominate over residues 88–114; it reads PTSTPMKHQTSGSSDQTDASNPISPST.

Belongs to the MDM12 family. As to quaternary structure, component of the ER-mitochondria encounter structure (ERMES) or MDM complex, composed of MMM1, MDM10, MDM12 and MDM34. An MMM1 homodimer associates with one molecule of MDM12 on each side in a pairwise head-to-tail manner, and the SMP-LTD domains of MMM1 and MDM12 generate a continuous hydrophobic tunnel for phospholipid trafficking.

It is found in the mitochondrion outer membrane. The protein localises to the endoplasmic reticulum membrane. Component of the ERMES/MDM complex, which serves as a molecular tether to connect the endoplasmic reticulum (ER) and mitochondria. Components of this complex are involved in the control of mitochondrial shape and protein biogenesis, and function in nonvesicular lipid trafficking between the ER and mitochondria. MDM12 is required for the interaction of the ER-resident membrane protein MMM1 and the outer mitochondrial membrane-resident beta-barrel protein MDM10. The MDM12-MMM1 subcomplex functions in the major beta-barrel assembly pathway that is responsible for biogenesis of all mitochondrial outer membrane beta-barrel proteins, and acts in a late step after the SAM complex. The MDM10-MDM12-MMM1 subcomplex further acts in the TOM40-specific pathway after the action of the MDM12-MMM1 complex. Essential for establishing and maintaining the structure of mitochondria and maintenance of mtDNA nucleoids. In Komagataella phaffii (strain GS115 / ATCC 20864) (Yeast), this protein is Mitochondrial distribution and morphology protein 12.